A 110-amino-acid polypeptide reads, in one-letter code: Nucleoid-associated protein Tola_2216 (110 aa).

It belongs to the YbaB/EbfC family. As to quaternary structure, homodimer.

The protein localises to the cytoplasm. It localises to the nucleoid. Binds to DNA and alters its conformation. May be involved in regulation of gene expression, nucleoid organization and DNA protection. This chain is Nucleoid-associated protein Tola_2216, found in Tolumonas auensis (strain DSM 9187 / NBRC 110442 / TA 4).